Here is a 536-residue protein sequence, read N- to C-terminus: Metal transporter Nramp2 (536 aa).

The disordered stretch occupies residues 1-37 (MSSPSGGEDSKDDEKDEESNRLLPLSSSSQSQSLQSE). The span at 22-36 (LLPLSSSSQSQSLQS) shows a compositional bias: low complexity. Asn-38 carries an N-linked (GlcNAc...) asparagine glycan. 12 helical membrane passes run 76–96 (LWLFTGPGFLMSIAFLDPGNL), 104–124 (AIAGYSLLWLLLWATVMGLLI), 161–181 (VALIGADIQEVIGSAIAIQIL), 185–205 (FLPLWAGVLITASDCFMFLFL), 213–233 (LEGVFAVLIATMALSFAWMCG), 259–279 (AVGVVGCVIMPHNVFLHSALV), 305–325 (VALFVSFMINLFVTTVFAKGF), 347–367 (YGGGLFPILYIWGIGLLAAGQ), 400–420 (SFAIIPTIIVAIIFNTSEASL), 435–455 (IPFALIPLLTLVAKEQVMGVF), 465–485 (AWTIAVLVILINGYLLIDFFI), and 492–512 (LFGFLIGSGTVAYVSFIIYLV).

It belongs to the NRAMP (TC 2.A.55) family.

It is found in the membrane. In terms of biological role, probable divalent metal transporter. This Populus trichocarpa (Western balsam poplar) protein is Metal transporter Nramp2.